The primary structure comprises 95 residues: Small ribosomal subunit protein bS6 (95 aa).

The protein belongs to the bacterial ribosomal protein bS6 family.

Its function is as follows. Binds together with bS18 to 16S ribosomal RNA. In Desulfitobacterium hafniense (strain DSM 10664 / DCB-2), this protein is Small ribosomal subunit protein bS6.